The sequence spans 602 residues: MCGIVGVVGNTNATDILIQGLEKLEYRGYDSAGIFVLDGADNHLVKAVGRIAELSAKTAGVEGTTGIGHTRWATHGKPTEDNAHPHRSETERFVLVHNGVIENYLEIKEEYLAGHHFKGQTDTEIAVHLIGKFAEEEGLSVLEAFKKALHIIRGSYAFALVDSQDPEVIYVAKNKSPLLIGLGEGYNMVCSDAMAMIRETNQYMEIHDQELVIVKADSVEVQDYDGNRRERASYTAELDLSDIGKGTYPYYMLKEIDEQPTVMRKLIQAYTDEAGQVVVDPDIIKAVQDADRIYILAAGTSYHAGFASKKMLEELTDTPVELGISSEWGYGMPLLSKKPLFIFISQSGETADSRQVLVKANEMGIPSLTVTNVPGSTLSREANYTMLLHAGPEIAVASTKAYTAQIAALAFLAKAVGEANGNAKAQAFDLVHELSIVAQSIESTLSEKETIEVKVRELLETTRNAFYIGRGQDYYVAMEASLKLKEISYIQCEGFAAGELKHGTIALIEEGTPVLALLSDPVLANHTRGNIQEVAARGAKVLTIAEENVAKDTDDIVLTTVHPYLSPISMVVPTQLVAYFATLHRGLDVDKPRNLAKSVTVE.

Residue Cys-2 is the Nucleophile; for GATase activity of the active site. A Glutamine amidotransferase type-2 domain is found at 2 to 217 (CGIVGVVGNT…DQELVIVKAD (216 aa)). The segment at 67–87 (IGHTRWATHGKPTEDNAHPHR) is disordered. The segment covering 77–87 (KPTEDNAHPHR) has biased composition (basic and acidic residues). 2 consecutive SIS domains span residues 283-422 (IIKA…ANGN) and 455-592 (VREL…VDKP). Lys-597 serves as the catalytic For Fru-6P isomerization activity.

In terms of assembly, homodimer.

It localises to the cytoplasm. The catalysed reaction is D-fructose 6-phosphate + L-glutamine = D-glucosamine 6-phosphate + L-glutamate. In terms of biological role, catalyzes the first step in hexosamine metabolism, converting fructose-6P into glucosamine-6P using glutamine as a nitrogen source. This chain is Glutamine--fructose-6-phosphate aminotransferase [isomerizing], found in Streptococcus pneumoniae serotype 4 (strain ATCC BAA-334 / TIGR4).